A 431-amino-acid chain; its full sequence is Histidinol dehydrogenase (431 aa).

3 residues coordinate NAD(+): Tyr127, Gln185, and Asn208. Substrate is bound by residues Ser234, Gln256, and His259. Positions 256 and 259 each coordinate Zn(2+). Active-site proton acceptor residues include Glu323 and His324. The substrate site is built by His324, Asp357, Glu411, and His416. Zn(2+) is bound at residue Asp357. His416 contacts Zn(2+).

The protein belongs to the histidinol dehydrogenase family. Requires Zn(2+) as cofactor.

It carries out the reaction L-histidinol + 2 NAD(+) + H2O = L-histidine + 2 NADH + 3 H(+). Its pathway is amino-acid biosynthesis; L-histidine biosynthesis; L-histidine from 5-phospho-alpha-D-ribose 1-diphosphate: step 9/9. Functionally, catalyzes the sequential NAD-dependent oxidations of L-histidinol to L-histidinaldehyde and then to L-histidine. The polypeptide is Histidinol dehydrogenase (Vibrio vulnificus (strain YJ016)).